A 34-amino-acid polypeptide reads, in one-letter code: Protamine (34 aa).

The interval 1–34 (PRRRRQASRPVRRRRRTRRSTAERRRRRVVRRRR) is disordered.

In terms of tissue distribution, testis.

The protein localises to the nucleus. Its subcellular location is the chromosome. Its function is as follows. Protamines substitute for histones in the chromatin of sperm during the haploid phase of spermatogenesis. They compact sperm DNA into a highly condensed, stable and inactive complex. The polypeptide is Protamine (Dicentrarchus labrax (European seabass)).